The sequence spans 428 residues: Glutamate-1-semialdehyde 2,1-aminomutase 1 (428 aa).

K267 carries the post-translational modification N6-(pyridoxal phosphate)lysine.

The protein belongs to the class-III pyridoxal-phosphate-dependent aminotransferase family. HemL subfamily. As to quaternary structure, homodimer. Pyridoxal 5'-phosphate serves as cofactor.

The protein resides in the cytoplasm. The enzyme catalyses (S)-4-amino-5-oxopentanoate = 5-aminolevulinate. It functions in the pathway porphyrin-containing compound metabolism; protoporphyrin-IX biosynthesis; 5-aminolevulinate from L-glutamyl-tRNA(Glu): step 2/2. The protein is Glutamate-1-semialdehyde 2,1-aminomutase 1 of Staphylococcus aureus (strain bovine RF122 / ET3-1).